Reading from the N-terminus, the 119-residue chain is Large ribosomal subunit protein uL18 (119 aa).

It belongs to the universal ribosomal protein uL18 family. In terms of assembly, part of the 50S ribosomal subunit; part of the 5S rRNA/L5/L18/L25 subcomplex. Contacts the 5S and 23S rRNAs.

Functionally, this is one of the proteins that bind and probably mediate the attachment of the 5S RNA into the large ribosomal subunit, where it forms part of the central protuberance. This chain is Large ribosomal subunit protein uL18, found in Xylella fastidiosa (strain 9a5c).